We begin with the raw amino-acid sequence, 143 residues long: Large ribosomal subunit protein uL11 (143 aa).

Belongs to the universal ribosomal protein uL11 family. Part of the ribosomal stalk of the 50S ribosomal subunit. Interacts with L10 and the large rRNA to form the base of the stalk. L10 forms an elongated spine to which L12 dimers bind in a sequential fashion forming a multimeric L10(L12)X complex. In terms of processing, one or more lysine residues are methylated.

Its function is as follows. Forms part of the ribosomal stalk which helps the ribosome interact with GTP-bound translation factors. This is Large ribosomal subunit protein uL11 from Paraburkholderia phytofirmans (strain DSM 17436 / LMG 22146 / PsJN) (Burkholderia phytofirmans).